We begin with the raw amino-acid sequence, 264 residues long: 2-C-methyl-D-erythritol 4-phosphate cytidylyltransferase (264 aa).

The segment at 234-264 (ARDPESAHPQSSVLASAFSGPGSRVSGPEEI) is disordered.

The protein belongs to the IspD/TarI cytidylyltransferase family. IspD subfamily.

The enzyme catalyses 2-C-methyl-D-erythritol 4-phosphate + CTP + H(+) = 4-CDP-2-C-methyl-D-erythritol + diphosphate. Its pathway is isoprenoid biosynthesis; isopentenyl diphosphate biosynthesis via DXP pathway; isopentenyl diphosphate from 1-deoxy-D-xylulose 5-phosphate: step 2/6. Functionally, catalyzes the formation of 4-diphosphocytidyl-2-C-methyl-D-erythritol from CTP and 2-C-methyl-D-erythritol 4-phosphate (MEP). This Xanthomonas euvesicatoria pv. vesicatoria (strain 85-10) (Xanthomonas campestris pv. vesicatoria) protein is 2-C-methyl-D-erythritol 4-phosphate cytidylyltransferase.